The primary structure comprises 501 residues: Cytochrome P450 3A31 (501 aa).

Residue cysteine 440 participates in heme binding.

This sequence belongs to the cytochrome P450 family. Requires heme as cofactor. In terms of tissue distribution, expressed constitutively in liver.

The protein localises to the endoplasmic reticulum membrane. Its subcellular location is the microsome membrane. It catalyses the reaction an organic molecule + reduced [NADPH--hemoprotein reductase] + O2 = an alcohol + oxidized [NADPH--hemoprotein reductase] + H2O + H(+). Cytochromes P450 are a group of heme-thiolate monooxygenases. In liver microsomes, this enzyme is involved in an NADPH-dependent electron transport pathway. It oxidizes a variety of structurally unrelated compounds, including steroids, fatty acids, and xenobiotics. In Mesocricetus auratus (Golden hamster), this protein is Cytochrome P450 3A31 (CYP3A31).